The primary structure comprises 216 residues: 3-isopropylmalate dehydratase small subunit (216 aa).

The protein belongs to the LeuD family. LeuD type 1 subfamily. As to quaternary structure, heterodimer of LeuC and LeuD.

It catalyses the reaction (2R,3S)-3-isopropylmalate = (2S)-2-isopropylmalate. The protein operates within amino-acid biosynthesis; L-leucine biosynthesis; L-leucine from 3-methyl-2-oxobutanoate: step 2/4. Its function is as follows. Catalyzes the isomerization between 2-isopropylmalate and 3-isopropylmalate, via the formation of 2-isopropylmaleate. In Acidovorax ebreus (strain TPSY) (Diaphorobacter sp. (strain TPSY)), this protein is 3-isopropylmalate dehydratase small subunit.